A 570-amino-acid chain; its full sequence is FERM domain-containing protein 5 (570 aa).

In terms of domain architecture, FERM spans 17–298; that stretch reads YSCTVRLLDD…ENQAFYKLEK (282 aa). The interaction with ROCK1 stretch occupies residues 308-353; sequence SNLFFKGSRFRYSGRVAKEVMESSAKIKREPPEIHRAGMVPSRSCP. The segment at 344-367 is disordered; that stretch reads AGMVPSRSCPSITHGPRLSSVPRT. Ser-375 is modified (phosphoserine). The segment at 385 to 407 is disordered; sequence DSAHSTPVRSTSHGDTFLPHVRS. Positions 388–398 are enriched in polar residues; that stretch reads HSTPVRSTSHG. A helical membrane pass occupies residues 504–524; it reads LLLVTMGLLFVLLLLLIILTE.

In terms of assembly, interacts with CTNND1. Interacts with ITGB5 (via cytoplasmic domain) and ROCK1.

The protein localises to the membrane. The protein resides in the cell junction. It is found in the adherens junction. Its function is as follows. May be involved in regulation of cell migration. May regulate cell-matrix interactions via its interaction with ITGB5 and modifying ITGB5 cytoplasmic tail interactions such as with FERMT2 and TLN1. May regulate ROCK1 kinase activity possibly involved in regulation of actin stress fiber formation. The sequence is that of FERM domain-containing protein 5 (FRMD5) from Homo sapiens (Human).